The primary structure comprises 354 residues: Protein RecA (354 aa).

Position 65 to 72 (G65 to T72) interacts with ATP.

The protein belongs to the RecA family.

The protein resides in the cytoplasm. Its function is as follows. Can catalyze the hydrolysis of ATP in the presence of single-stranded DNA, the ATP-dependent uptake of single-stranded DNA by duplex DNA, and the ATP-dependent hybridization of homologous single-stranded DNAs. It interacts with LexA causing its activation and leading to its autocatalytic cleavage. This is Protein RecA from Aeromonas hydrophila subsp. hydrophila (strain ATCC 7966 / DSM 30187 / BCRC 13018 / CCUG 14551 / JCM 1027 / KCTC 2358 / NCIMB 9240 / NCTC 8049).